The chain runs to 810 residues: Zinc finger transcription factor YRR1 (810 aa).

A disordered region spans residues 1-47; that stretch reads MKRRSDALLGSFQATNVTPPSDNSNSTAGGANGSNSGTPTSTSGKKR. Positions 12–22 are enriched in polar residues; that stretch reads FQATNVTPPSD. Low complexity predominate over residues 23-43; that stretch reads NSNSTAGGANGSNSGTPTSTS. A DNA-binding region (zn(2)-C6 fungal-type) is located at residues 54 to 82; it reads CGFCRRRKLRCDQQKPMCSTCISRNLTTC. Residues 722–742 are disordered; sequence ELDPQSDNPSSEAKIVSDRQR.

It localises to the cytoplasm. The protein localises to the nucleus. Functionally, transcription factor involved in the regulation of multidrug resistance genes. Acts in concert with YRR1. In Saccharomyces cerevisiae (strain ATCC 204508 / S288c) (Baker's yeast), this protein is Zinc finger transcription factor YRR1 (YRR1).